Reading from the N-terminus, the 615-residue chain is RNA polymerase sigma factor RpoD (615 aa).

The interval 177 to 215 is disordered; it reads APTATHVGSELSQEDLDDDEDEDEEDGDDDAADDDNSID. Positions 188–214 are enriched in acidic residues; that stretch reads SQEDLDDDEDEDEEDGDDDAADDDNSI. The segment at 381–451 is sigma-70 factor domain-2; sequence MVEANLRLVI…TRSIADQART (71 aa). The Interaction with polymerase core subunit RpoC motif lies at 405–408; that stretch reads DLIQ. The segment at 460 to 536 is sigma-70 factor domain-3; the sequence is ETINKLNRIS…DTTLELPLDS (77 aa). Residues 549 to 602 are sigma-70 factor domain-4; that stretch reads VLAGLTAREAKVLRMRFGIDMNTDHTLEEVGKQFDVTRERIRQIEAKALRKLRH. A DNA-binding region (H-T-H motif) is located at residues 575–594; that stretch reads LEEVGKQFDVTRERIRQIEA.

This sequence belongs to the sigma-70 factor family. RpoD/SigA subfamily. Interacts transiently with the RNA polymerase catalytic core.

The protein resides in the cytoplasm. Its function is as follows. Sigma factors are initiation factors that promote the attachment of RNA polymerase to specific initiation sites and are then released. This sigma factor is the primary sigma factor during exponential growth. In Salmonella typhi, this protein is RNA polymerase sigma factor RpoD.